The chain runs to 201 residues: UPF0301 protein Smed_0532 (201 aa).

This sequence belongs to the UPF0301 (AlgH) family.

The sequence is that of UPF0301 protein Smed_0532 from Sinorhizobium medicae (strain WSM419) (Ensifer medicae).